A 259-amino-acid chain; its full sequence is Nuclear egress protein 1 (259 aa).

The segment at 80–184 (CLDLSPYANE…YVVFQTRTLH (105 aa)) adopts a CCCH-type zinc-finger fold.

It belongs to the herpesviridae NEC1 protein family. In terms of assembly, forms a heterohexameric complex with NEC2. Interacts with capsid vertex specific component 2/CVC2; this interaction directs the capsid to the host inner nuclear membrane to initiate budding. Phosphorylated at serine residues in the N-terminus. This phosphorylation regulates the localization within the inner nuclear membrane.

The protein resides in the host nucleus inner membrane. In terms of biological role, plays an essential role in virion nuclear egress, the first step of virion release from infected cell. Within the host nucleus, NEC1 interacts with the newly formed capsid through the vertexes and directs it to the inner nuclear membrane by associating with NEC2. Induces the budding of the capsid at the inner nuclear membrane as well as its envelopment into the perinuclear space. There, the NEC1/NEC2 complex promotes the fusion of the enveloped capsid with the outer nuclear membrane and the subsequent release of the viral capsid into the cytoplasm where it will reach the secondary budding sites in the host Golgi or trans-Golgi network. In Homo sapiens (Human), this protein is Nuclear egress protein 1.